A 364-amino-acid chain; its full sequence is tRNA(Met) cytidine acetate ligase (364 aa).

ATP is bound by residues isoleucine 7 to leucine 20, glycine 96, asparagine 152, and arginine 175.

This sequence belongs to the TmcAL family.

Its subcellular location is the cytoplasm. The enzyme catalyses cytidine(34) in elongator tRNA(Met) + acetate + ATP = N(4)-acetylcytidine(34) in elongator tRNA(Met) + AMP + diphosphate. Its function is as follows. Catalyzes the formation of N(4)-acetylcytidine (ac(4)C) at the wobble position of elongator tRNA(Met), using acetate and ATP as substrates. First activates an acetate ion to form acetyladenylate (Ac-AMP) and then transfers the acetyl group to tRNA to form ac(4)C34. The sequence is that of tRNA(Met) cytidine acetate ligase from Streptococcus sanguinis (strain SK36).